The primary structure comprises 128 residues: MRFAIVVTGPAYGTQQASSALQFAHALVNEGHELSSVFFYREGVYNANQLTSPASDEFDLVRAWQQLGAQHGVALNICVAAALRRGIVDETEAKRLALASANLQPGFSLSGLGALAEASLTCDRVVQF.

Residue C78 is the Cysteine persulfide intermediate of the active site.

This sequence belongs to the DsrE/TusD family. In terms of assembly, heterohexamer, formed by a dimer of trimers. The hexameric TusBCD complex contains 2 copies each of TusB, TusC and TusD. The TusBCD complex interacts with TusE.

Its subcellular location is the cytoplasm. Part of a sulfur-relay system required for 2-thiolation of 5-methylaminomethyl-2-thiouridine (mnm(5)s(2)U) at tRNA wobble positions. Accepts sulfur from TusA and transfers it in turn to TusE. The sequence is that of Sulfurtransferase TusD from Citrobacter koseri (strain ATCC BAA-895 / CDC 4225-83 / SGSC4696).